We begin with the raw amino-acid sequence, 180 residues long: ATP synthase subunit delta (180 aa).

Belongs to the ATPase delta chain family. F-type ATPases have 2 components, F(1) - the catalytic core - and F(0) - the membrane proton channel. F(1) has five subunits: alpha(3), beta(3), gamma(1), delta(1), epsilon(1). CF(0) has four main subunits: a(1), b(1), b'(1) and c(10-14). The alpha and beta chains form an alternating ring which encloses part of the gamma chain. F(1) is attached to F(0) by a central stalk formed by the gamma and epsilon chains, while a peripheral stalk is formed by the delta, b and b' chains.

The protein localises to the cellular thylakoid membrane. F(1)F(0) ATP synthase produces ATP from ADP in the presence of a proton or sodium gradient. F-type ATPases consist of two structural domains, F(1) containing the extramembraneous catalytic core and F(0) containing the membrane proton channel, linked together by a central stalk and a peripheral stalk. During catalysis, ATP synthesis in the catalytic domain of F(1) is coupled via a rotary mechanism of the central stalk subunits to proton translocation. Functionally, this protein is part of the stalk that links CF(0) to CF(1). It either transmits conformational changes from CF(0) to CF(1) or is implicated in proton conduction. This chain is ATP synthase subunit delta, found in Synechococcus elongatus (strain ATCC 33912 / PCC 7942 / FACHB-805) (Anacystis nidulans R2).